A 301-amino-acid chain; its full sequence is Probable alpha-L-glutamate ligase (301 aa).

The 184-residue stretch at 104–287 (LQLLSRKGVG…VAALVMEFIE (184 aa)) folds into the ATP-grasp domain. Residues Lys141, 178–179 (EY), Asp187, and 211–213 (RSN) contribute to the ATP site. Residues Asp248, Glu260, and Asn262 each coordinate Mg(2+). Mn(2+)-binding residues include Asp248, Glu260, and Asn262.

The protein belongs to the RimK family. Mg(2+) serves as cofactor. It depends on Mn(2+) as a cofactor.

In Saccharophagus degradans (strain 2-40 / ATCC 43961 / DSM 17024), this protein is Probable alpha-L-glutamate ligase.